Consider the following 51-residue polypeptide: Sperm protamine P1 (51 aa).

The protein belongs to the protamine P1 family. In terms of assembly, cross-linked by interchain disulfide bonds around the DNA-helix. As to expression, testis.

The protein localises to the nucleus. It is found in the chromosome. Protamines substitute for histones in the chromatin of sperm during the haploid phase of spermatogenesis. They compact sperm DNA into a highly condensed, stable and inactive complex. This is Sperm protamine P1 (PRM1) from Pongo pygmaeus (Bornean orangutan).